The sequence spans 156 residues: Small ribosomal subunit protein uS7 (156 aa).

It belongs to the universal ribosomal protein uS7 family. Part of the 30S ribosomal subunit. Contacts proteins S9 and S11.

In terms of biological role, one of the primary rRNA binding proteins, it binds directly to 16S rRNA where it nucleates assembly of the head domain of the 30S subunit. Is located at the subunit interface close to the decoding center, probably blocks exit of the E-site tRNA. The protein is Small ribosomal subunit protein uS7 of Streptococcus pyogenes serotype M12 (strain MGAS2096).